The sequence spans 321 residues: tRNA uridine(34) hydroxylase (321 aa).

In terms of domain architecture, Rhodanese spans 135–233; it reads DDPDTLVIDT…YLEQVPEEES (99 aa). The active-site Cysteine persulfide intermediate is Cys193. The disordered stretch occupies residues 301–321; the sequence is RQRQMDQLSSASSKKSDDFSL.

Belongs to the TrhO family.

It catalyses the reaction uridine(34) in tRNA + AH2 + O2 = 5-hydroxyuridine(34) in tRNA + A + H2O. In terms of biological role, catalyzes oxygen-dependent 5-hydroxyuridine (ho5U) modification at position 34 in tRNAs. The protein is tRNA uridine(34) hydroxylase of Parasynechococcus marenigrum (strain WH8102).